We begin with the raw amino-acid sequence, 208 residues long: Large ribosomal subunit protein uL4 (208 aa).

Residues 45 to 89 (RQGTHAHKNRSAVSGGGKKPWRQKGTGRARQGSTRSPQWRGGGTV) are disordered.

The protein belongs to the universal ribosomal protein uL4 family. As to quaternary structure, part of the 50S ribosomal subunit.

One of the primary rRNA binding proteins, this protein initially binds near the 5'-end of the 23S rRNA. It is important during the early stages of 50S assembly. It makes multiple contacts with different domains of the 23S rRNA in the assembled 50S subunit and ribosome. Functionally, forms part of the polypeptide exit tunnel. The polypeptide is Large ribosomal subunit protein uL4 (Lactococcus lactis subsp. cremoris (strain MG1363)).